We begin with the raw amino-acid sequence, 544 residues long: Major royal jelly protein 3 (544 aa).

The N-terminal stretch at 1 to 20 is a signal peptide; that stretch reads MTKWLLLVVCLGIACQDVTS. Residue asparagine 183 is glycosylated (N-linked (GlcNAc...) asparagine). A disordered region spans residues 421-544; sequence RYHNQNAGNQ…NQVHHSSKLH (124 aa). Tandem repeats lie at residues 424 to 428, 429 to 433, 434 to 438, 439 to 443, 444 to 448, 449 to 453, 454 to 458, 459 to 463, 464 to 468, 469 to 473, 474 to 478, 479 to 483, 484 to 488, 489 to 493, 494 to 498, 499 to 503, 504 to 508, 509 to 513, 514 to 518, and 519 to 523. 3 stretches are compositionally biased toward low complexity: residues 424–460, 468–510, and 518–530; these read NQNAGNQNADNQNADNQNANNQNADNQNANKQNGNRQ, NKQN…GNRQ, and NRQNDNQNNQNDN. Residues 424-523 form a 23 X 5 AA tandem repeats of [NKR]-[RQ]-N-[AGD]-[DNG] region; that stretch reads NQNAGNQNAD…KRNGNRQNDN (100 aa). Residues 524–525 form a 21; half-length repeat; the sequence is QN. 2 repeat units span residues 526–530 and 531–535.

Belongs to the major royal jelly protein family. In terms of assembly, homoligomer; in the absence of RNA, assembles into a higher-order oligomeric form, composed of around 20 monomer units. In terms of tissue distribution, found in and secreted from the hypopharyngeal glands of the worker honey bee (at protein level); expression peaks at 12 days post eclosion. Expressed in the brains of worker bees. Expressed in the brains of adult worker bees peaking at 12 days post eclosion (at protein level). Expressed in the spermatheca of adult queen bees (at protein level); Expression levels are higher in mated queens than in virgin queens. Expressed in queen bee ovaries and male drone testes. Expression in the head of forager worker bees is lower than in the heads of nurse worker bees.

Its subcellular location is the secreted. Functionally, abundant protein component of royal jelly, a substance produced in the hypopharyngeal gland containing proteins, free amino acids, fatty acids, sugars and other nutrients, which is fed to developing larvae by worker nurse bees. Major royal jelly proteins (MRJPs) are high in essential amino acids and probably have a nutritional function in larval food. All larvae are fed some royal jelly (also known as worker jelly) early in their development but it forms the principal source of nutrition for larvae destined to become queen bees. Secreted RNA-binding protein required to concentrate, stabilize and enhance environmental RNA bioavailability in the honey bee royal jelly. Acts as a RNA-aggregating protein: binds 18 nucleotides and longer single- and double-stranded RNA (ssRNA and dsRNA, respectively) in a non-specific manner. RNA-binding drives super-order assembly of oligomers into extracellular ribonucleoprotein granules that concentrate, protect and enhance RNA uptake granules, facilitating RNA transfer among bees. Produced in the spermatheca of adult queen bees, along with other major royal jelly proteins, where it may act as a nutrient supply for sperm stored by mated queens, or be involved in energy metabolism. The polypeptide is Major royal jelly protein 3 (Apis mellifera (Honeybee)).